The chain runs to 579 residues: Nif-specific regulatory protein (579 aa).

Residues 40–187 form the GAF domain; it reads DPVAEVPQIF…MVASLLEQAL (148 aa). One can recognise a Sigma-54 factor interaction domain in the interval 226–454; the sequence is IVGSSPAIAE…LENCVNRAAA (229 aa). Residues 254–261 and 317–326 each bind ATP; these read GESGTGKE and ADGGTLFLDE. Residues 464-536 form an inter-domain linker region; the sequence is EELACRQGAC…PLRTKTAQLS (73 aa). A divalent metal cation-binding residues include Cys-468 and Cys-473. Positions 502–529 are disordered; the sequence is RVSAPPPEPAPAPEPAPEAPPREEVPLR. 7 consecutive repeat copies span residues 505 to 506, 507 to 508, 509 to 510, 511 to 512, 513 to 514, 515 to 516, and 517 to 518. Residues 505–518 are 7 X 2 AA tandem repeats of X-P; the sequence is APPPEPAPAPEPAP. A compositionally biased stretch (pro residues) spans 505–520; it reads APPPEPAPAPEPAPEA. Residues 537-579 form a C-terminal DNA-binding domain region; the sequence is REELLRALESAGWVQAKAARLLGMTPRQIAYALQKFEIELRKI. Residues 551-570 constitute a DNA-binding region (H-T-H motif); that stretch reads QAKAARLLGMTPRQIAYALQ.

In terms of assembly, interacts with sigma-54.

Functionally, required for activation of most nif operons, which are directly involved in nitrogen fixation. This is Nif-specific regulatory protein (nifA1) from Rhodobacter capsulatus (Rhodopseudomonas capsulata).